The chain runs to 296 residues: Acetylglutamate kinase (296 aa).

Substrate is bound by residues Gly69–Gly70, Arg91, and Asn193.

The protein belongs to the acetylglutamate kinase family. ArgB subfamily.

Its subcellular location is the cytoplasm. It catalyses the reaction N-acetyl-L-glutamate + ATP = N-acetyl-L-glutamyl 5-phosphate + ADP. It participates in amino-acid biosynthesis; L-arginine biosynthesis; N(2)-acetyl-L-ornithine from L-glutamate: step 2/4. In terms of biological role, catalyzes the ATP-dependent phosphorylation of N-acetyl-L-glutamate. This chain is Acetylglutamate kinase, found in Verminephrobacter eiseniae (strain EF01-2).